Here is a 291-residue protein sequence, read N- to C-terminus: MSKIPPVNVKDLLDAGVHFGHKTSRWNPKMAPYIYGERDEVHIIDLRQTAALMNVALNAIYETVKNDGKVLFVSTKIQASDIIAEYAEKCGQYYVNHRWLGGMLTNWKTISGSIEKLNKLEQTLENEEACIGYTKKEILDMNRKKDKLLLSLAGIRELHSKPDLIVIIDTNKEHIAISEAVRLDIPIVAVVDTNSNPDHIDYPIPGNDDAIRSIRFYCSLFADAALQGLEESMKASGVDLGSIQEHGDKNLAPKNVSKLKQAKKFSKTKNINEEANTEFEQALSDADEDKN.

A disordered region spans residues 270-291; it reads NINEEANTEFEQALSDADEDKN.

This sequence belongs to the universal ribosomal protein uS2 family.

This Rickettsia bellii (strain OSU 85-389) protein is Small ribosomal subunit protein uS2.